We begin with the raw amino-acid sequence, 54 residues long: Rubredoxin (54 aa).

One can recognise a Rubredoxin-like domain in the interval 2–52 (AKWVCKICGYIYDEDAGDPDNGISPGTKFEELPDDWVCPICGAPKSEFEKL). The Fe cation site is built by cysteine 6, cysteine 9, cysteine 39, and cysteine 42.

It belongs to the rubredoxin family. Fe(3+) is required as a cofactor.

Its function is as follows. Rubredoxin is a small nonheme, iron protein lacking acid-labile sulfide. Its single Fe, chelated to 4 Cys, functions as an electron acceptor and may also stabilize the conformation of the molecule. The protein is Rubredoxin (rub) of Pyrococcus furiosus (strain ATCC 43587 / DSM 3638 / JCM 8422 / Vc1).